A 423-amino-acid polypeptide reads, in one-letter code: Gamma-glutamyl phosphate reductase (423 aa).

It belongs to the gamma-glutamyl phosphate reductase family.

It is found in the cytoplasm. It carries out the reaction L-glutamate 5-semialdehyde + phosphate + NADP(+) = L-glutamyl 5-phosphate + NADPH + H(+). Its pathway is amino-acid biosynthesis; L-proline biosynthesis; L-glutamate 5-semialdehyde from L-glutamate: step 2/2. In terms of biological role, catalyzes the NADPH-dependent reduction of L-glutamate 5-phosphate into L-glutamate 5-semialdehyde and phosphate. The product spontaneously undergoes cyclization to form 1-pyrroline-5-carboxylate. This chain is Gamma-glutamyl phosphate reductase, found in Burkholderia lata (strain ATCC 17760 / DSM 23089 / LMG 22485 / NCIMB 9086 / R18194 / 383).